A 147-amino-acid chain; its full sequence is Hemoglobin subunit gamma-1 (147 aa).

The region spanning 3 to 147 (NFTAEDKAAI…VASALGSRYH (145 aa)) is the Globin domain. A Phosphothreonine modification is found at Thr13. Ser45, Ser51, and Ser53 each carry phosphoserine. N6-acetyllysine is present on Lys60. Residue His64 coordinates heme b. Lys83 is modified (N6-acetyllysine). His93 contacts heme b. At Cys94 the chain carries S-nitrosocysteine. Residue Ser140 is modified to Phosphoserine.

Belongs to the globin family. As to quaternary structure, heterotetramer of two alpha chains and two gamma chains in fetal hemoglobin (Hb F). In terms of tissue distribution, red blood cells.

Gamma chains make up the fetal hemoglobin F, in combination with alpha chains. This Sapajus apella (Brown-capped capuchin) protein is Hemoglobin subunit gamma-1 (HBG1).